The chain runs to 308 residues: Apolipoprotein F (308 aa).

It belongs to the apolipoprotein F family.

The protein localises to the secreted. In terms of biological role, minor apolipoprotein that associates with LDL. Inhibits cholesteryl ester transfer protein (CETP) activity and appears to be an important regulator of cholesterol transport. Also associates to a lesser degree with VLDL, Apo-AI and Apo-AII. This is Apolipoprotein F (Apof) from Rattus norvegicus (Rat).